A 115-amino-acid polypeptide reads, in one-letter code: U3-lycotoxin-Ls1h (115 aa).

An N-terminal signal peptide occupies residues 1–20; sequence MKFVLLFGVFLVTLFSYSSA. A propeptide spanning residues 21–44 is cleaved from the precursor; the sequence is EMLDDFDQADEDELLSLIEKEEAR. 4 disulfide bridges follow: Cys-48/Cys-63, Cys-55/Cys-72, Cys-62/Cys-87, and Cys-74/Cys-85.

Belongs to the neurotoxin 19 (CSTX) family. 01 subfamily. In terms of tissue distribution, expressed by the venom gland.

The protein resides in the secreted. The sequence is that of U3-lycotoxin-Ls1h from Lycosa singoriensis (Wolf spider).